A 220-amino-acid polypeptide reads, in one-letter code: Ribosome maturation factor RimM (220 aa).

The PRC barrel domain occupies 143 to 220; sequence EGEFYWVDLI…RIVVDWGLDY (78 aa).

Belongs to the RimM family. Binds ribosomal protein uS19.

The protein localises to the cytoplasm. In terms of biological role, an accessory protein needed during the final step in the assembly of 30S ribosomal subunit, possibly for assembly of the head region. Essential for efficient processing of 16S rRNA. May be needed both before and after RbfA during the maturation of 16S rRNA. It has affinity for free ribosomal 30S subunits but not for 70S ribosomes. The protein is Ribosome maturation factor RimM of Cupriavidus metallidurans (strain ATCC 43123 / DSM 2839 / NBRC 102507 / CH34) (Ralstonia metallidurans).